Here is a 701-residue protein sequence, read N- to C-terminus: Glycine--tRNA ligase beta subunit (701 aa).

It belongs to the class-II aminoacyl-tRNA synthetase family. As to quaternary structure, tetramer of two alpha and two beta subunits.

The protein localises to the cytoplasm. The enzyme catalyses tRNA(Gly) + glycine + ATP = glycyl-tRNA(Gly) + AMP + diphosphate. The protein is Glycine--tRNA ligase beta subunit of Anaeromyxobacter dehalogenans (strain 2CP-1 / ATCC BAA-258).